Here is a 259-residue protein sequence, read N- to C-terminus: 3-methyl-2-oxobutanoate hydroxymethyltransferase (259 aa).

Residues D44 and D83 each contribute to the Mg(2+) site. Residues 44–45 (DS), D83, and K113 each bind 3-methyl-2-oxobutanoate. Position 115 (E115) interacts with Mg(2+). E183 serves as the catalytic Proton acceptor.

This sequence belongs to the PanB family. In terms of assembly, homodecamer; pentamer of dimers. Mg(2+) is required as a cofactor.

The protein localises to the cytoplasm. The enzyme catalyses 3-methyl-2-oxobutanoate + (6R)-5,10-methylene-5,6,7,8-tetrahydrofolate + H2O = 2-dehydropantoate + (6S)-5,6,7,8-tetrahydrofolate. It functions in the pathway cofactor biosynthesis; (R)-pantothenate biosynthesis; (R)-pantoate from 3-methyl-2-oxobutanoate: step 1/2. In terms of biological role, catalyzes the reversible reaction in which hydroxymethyl group from 5,10-methylenetetrahydrofolate is transferred onto alpha-ketoisovalerate to form ketopantoate. In Acaryochloris marina (strain MBIC 11017), this protein is 3-methyl-2-oxobutanoate hydroxymethyltransferase.